The following is a 552-amino-acid chain: 4-coumarate--CoA ligase-like 4 (552 aa).

A disordered region spans residues 182-205 (ISATTPDPARRKDRVTQDDPATLL). Positions 189–198 (PARRKDRVTQ) are enriched in basic and acidic residues. Residues Ser207, Ser208, Gly209, Thr210, Thr211, and Lys215 each coordinate ATP. Residue Tyr256 coordinates (E)-4-coumaroyl-AMP. Lys277 provides a ligand contact to CoA. The interval 279–346 (ELPEMLRSIN…EKYPQVEILQ (68 aa)) is SBD1. 4 residues coordinate (E)-4-coumaroyl-AMP: Gly324, Gln346, Gly347, and Thr351. ATP is bound by residues Gln346, Gly347, Thr351, Asp432, and Arg447. Residues 347 to 411 (GYGLTESTAI…IRGPYVMKGY (65 aa)) form an SBD2 region. 2 residues coordinate (E)-4-coumaroyl-AMP: Lys449 and Lys453. CoA is bound by residues Lys455 and Gly456. Residue Lys538 participates in ATP binding.

Belongs to the ATP-dependent AMP-binding enzyme family. Requires Mg(2+) as cofactor.

The enzyme catalyses (E)-4-coumarate + ATP + CoA = (E)-4-coumaroyl-CoA + AMP + diphosphate. It carries out the reaction (E)-4-coumarate + ATP + H(+) = (E)-4-coumaroyl-AMP + diphosphate. The catalysed reaction is (E)-4-coumaroyl-AMP + CoA = (E)-4-coumaroyl-CoA + AMP + H(+). Functionally, carboxylate--CoA ligase that may use 4-coumarate as substrate. Follows a two-step reaction mechanism, wherein the carboxylate substrate first undergoes adenylation by ATP, followed by a thioesterification in the presence of CoA to yield the final CoA thioester. The polypeptide is 4-coumarate--CoA ligase-like 4 (4CLL4) (Oryza sativa subsp. japonica (Rice)).